The chain runs to 183 residues: Acireductone dioxygenase (183 aa).

Fe(2+) contacts are provided by His-99, His-101, Glu-105, and His-144. The Ni(2+) site is built by His-99, His-101, Glu-105, and His-144.

This sequence belongs to the acireductone dioxygenase (ARD) family. In terms of assembly, monomer. Fe(2+) serves as cofactor. Requires Ni(2+) as cofactor.

It catalyses the reaction 1,2-dihydroxy-5-(methylsulfanyl)pent-1-en-3-one + O2 = 3-(methylsulfanyl)propanoate + CO + formate + 2 H(+). The enzyme catalyses 1,2-dihydroxy-5-(methylsulfanyl)pent-1-en-3-one + O2 = 4-methylsulfanyl-2-oxobutanoate + formate + 2 H(+). The protein operates within amino-acid biosynthesis; L-methionine biosynthesis via salvage pathway; L-methionine from S-methyl-5-thio-alpha-D-ribose 1-phosphate: step 5/6. Its function is as follows. Catalyzes 2 different reactions between oxygen and the acireductone 1,2-dihydroxy-3-keto-5-methylthiopentene (DHK-MTPene) depending upon the metal bound in the active site. Fe-containing acireductone dioxygenase (Fe-ARD) produces formate and 2-keto-4-methylthiobutyrate (KMTB), the alpha-ketoacid precursor of methionine in the methionine recycle pathway. Ni-containing acireductone dioxygenase (Ni-ARD) produces methylthiopropionate, carbon monoxide and formate, and does not lie on the methionine recycle pathway. The sequence is that of Acireductone dioxygenase from Microcystis aeruginosa.